A 154-amino-acid polypeptide reads, in one-letter code: RING finger protein 11 (154 aa).

Residues 1 to 12 are compositionally biased toward polar residues; that stretch reads MGNCLKSPTSDD. A disordered region spans residues 1–53; sequence MGNCLKSPTSDDISLLHESQSDRASFGEGTEPDQEPPPPYQEQVPVPVYHPTP. The N-myristoyl glycine moiety is linked to residue glycine 2. Residue cysteine 4 is the site of S-palmitoyl cysteine attachment. 2 positions are modified to phosphoserine: serine 14 and serine 25. Residues 37–40 carry the PPxY motif motif; the sequence is PPPY. Residues 41 to 51 are compositionally biased toward low complexity; sequence QEQVPVPVYHP. The segment at 99 to 140 adopts an RING-type zinc-finger fold; the sequence is CVICMMDFVYGDPIRFLPCMHIYHLDCIDDWLMRSFTCPSCM. Threonine 135 bears the Phosphothreonine; by PKB/AKT1 mark.

In terms of assembly, interacts (when phosphorylated) with 14-3-3. Interacts with the E3 ubiquitin-ligases NEDD4, ITCH, SMURF2 and WWP1. Also interacts with the E2 ubiquitin-conjugating enzymes UBE2D1 and UBE2N, but neither with CDC34, nor with UBE2L3. Interacts with ZNF350, EPS15 and STAMBP. After TNF stimulation, interacts with TAX1BP1, TNFAIP3 and RIPK1; these interactions are transient and they are lost after 1 hour of stimulation with TNF. Interacts with GGA1. In terms of processing, ubiquitinated in the presence of ITCH, SMURF2 and UBE2D1, as well as WWP1. Post-translationally, phosphorylation by PKB/AKT1 may accelerate degradation by the proteasome. Acylation at both Gly-2 and Cys-4 is required for proper localization to the endosomes.

The protein resides in the early endosome. It localises to the recycling endosome. The protein localises to the cytoplasm. It is found in the nucleus. In terms of biological role, essential component of a ubiquitin-editing protein complex, comprising also TNFAIP3, ITCH and TAX1BP1, that ensures the transient nature of inflammatory signaling pathways. Promotes the association of TNFAIP3 to RIPK1 after TNF stimulation. TNFAIP3 deubiquitinates 'Lys-63' polyubiquitin chains on RIPK1 and catalyzes the formation of 'Lys-48'-polyubiquitin chains. This leads to RIPK1 proteasomal degradation and consequently termination of the TNF- or LPS-mediated activation of NF-kappa-B. Recruits STAMBP to the E3 ubiquitin-ligase SMURF2 for ubiquitination, leading to its degradation by the 26S proteasome. The chain is RING finger protein 11 (RNF11) from Bos taurus (Bovine).